A 434-amino-acid chain; its full sequence is UPF0597 protein CLB_1949 (434 aa).

Belongs to the UPF0597 family.

This Clostridium botulinum (strain ATCC 19397 / Type A) protein is UPF0597 protein CLB_1949.